The following is a 251-amino-acid chain: ATP synthase subunit a (251 aa).

5 consecutive transmembrane segments (helical) span residues 14–34, 78–98, 107–127, 174–194, and 196–216; these read GFVK…LLAV, YLPF…FAVF, SLST…FYGI, MILA…MGVL, and LLIG…YIAA. The segment at 224 to 251 is disordered; the sequence is NAGASDDEGGEDAKSACAAGGKICKHKP.

This sequence belongs to the ATPase A chain family. As to quaternary structure, F-type ATPases have 2 components, CF(1) - the catalytic core - and CF(0) - the membrane proton channel. CF(1) has five subunits: alpha(3), beta(3), gamma(1), delta(1), epsilon(1). CF(0) has three main subunits: a(1), b(2) and c(9-12). The alpha and beta chains form an alternating ring which encloses part of the gamma chain. CF(1) is attached to CF(0) by a central stalk formed by the gamma and epsilon chains, while a peripheral stalk is formed by the delta and b chains.

The protein resides in the cell inner membrane. Its function is as follows. Key component of the proton channel; it plays a direct role in the translocation of protons across the membrane. The protein is ATP synthase subunit a of Nitrosospira multiformis (strain ATCC 25196 / NCIMB 11849 / C 71).